Here is a 927-residue protein sequence, read N- to C-terminus: Dual serine/threonine and tyrosine protein kinase (927 aa).

A disordered region spans residues 1-21 (MEADGQSWAGESVSGPGPGGG). The stretch at 393 to 429 (RKKENELYESLMNIANRKQEEMKDMIVETLNTMKEEL) forms a coiled coil. The Protein kinase domain maps to 650–904 (PKLGQELGRG…PLLGIVQPML (255 aa)). Residues 656 to 664 (LGRGQYGVV) and lysine 679 each bind ATP. Catalysis depends on aspartate 775, which acts as the Proton acceptor.

Belongs to the protein kinase superfamily. Ser/Thr protein kinase family. Expressed in brain, heart, skeletal muscle, kidney and lung. Expressed in maturing tubular epithelia, with the most prominent expression in the medulla and the papilla. Expressed in thin ascending limb of the loop of Henle and the distal convoluted tubule. Expressed in all layers of transitional ureteric epithelium and in the ureteric smooth-muscle cells (at protein level). Widely expressed. Highly expressed in many brain regions, including in cerebellum, olfactory, hippocampus and cerebral cortex.

Its subcellular location is the cytoplasm. The protein resides in the cell membrane. It is found in the apical cell membrane. It localises to the basolateral cell membrane. The protein localises to the cell junction. It carries out the reaction L-seryl-[protein] + ATP = O-phospho-L-seryl-[protein] + ADP + H(+). The enzyme catalyses L-threonyl-[protein] + ATP = O-phospho-L-threonyl-[protein] + ADP + H(+). It catalyses the reaction L-tyrosyl-[protein] + ATP = O-phospho-L-tyrosyl-[protein] + ADP + H(+). Its function is as follows. Acts as a positive regulator of ERK phosphorylation downstream of fibroblast growth factor-receptor activation. Involved in the regulation of both caspase-dependent apoptosis and caspase-independent cell death. In the skin, it plays a predominant role in suppressing caspase-dependent apoptosis in response to UV stress in a range of dermal cell types. In Mus musculus (Mouse), this protein is Dual serine/threonine and tyrosine protein kinase (Dstyk).